The following is a 270-amino-acid chain: Putative carbamate hydrolase RutD (270 aa).

The protein belongs to the AB hydrolase superfamily. Hydrolase RutD family.

The catalysed reaction is carbamate + 2 H(+) = NH4(+) + CO2. Functionally, involved in pyrimidine catabolism. May facilitate the hydrolysis of carbamate, a reaction that can also occur spontaneously. The protein is Putative carbamate hydrolase RutD of Escherichia coli (strain SMS-3-5 / SECEC).